Reading from the N-terminus, the 61-residue chain is Large ribosomal subunit protein uL30 (61 aa).

Belongs to the universal ribosomal protein uL30 family. Part of the 50S ribosomal subunit.

In Rubrobacter xylanophilus (strain DSM 9941 / JCM 11954 / NBRC 16129 / PRD-1), this protein is Large ribosomal subunit protein uL30.